A 199-amino-acid chain; its full sequence is MTECFLSDQEIRKLNRDLRILIAANGTLTRVLNIVADDEVIVQIVKQRIHDVSPKLSEFEQLGQVGVGRVLQRYIILKGRNSEHLFVAAESLIAIDRLPAAIITRLTQTNDPLGEVMAASHIETFKEEAKVWVGDLPGWLALHGYQNSRKRAVARRYRVISGGQPIMVVTEHFLRSVFRDAPHEEPDRWQFSNAITLAR.

This sequence belongs to the chorismate pyruvate-lyase type 2 family.

It catalyses the reaction chorismate = 4-hydroxybenzoate + pyruvate. In terms of biological role, removes the pyruvyl group from chorismate to provide 4-hydroxybenzoate (4HB). Involved in the synthesis of glycosylated p-hydroxybenzoic acid methyl esters (p-HBADs) and phenolic glycolipids (PGL) that play important roles in the pathogenesis of mycobacterial infections. The chain is Chorismate pyruvate-lyase from Mycobacterium bovis (strain ATCC BAA-935 / AF2122/97).